The chain runs to 166 residues: Regulatory protein RecX (166 aa).

It belongs to the RecX family.

It localises to the cytoplasm. Its function is as follows. Modulates RecA activity. The chain is Regulatory protein RecX from Escherichia coli O139:H28 (strain E24377A / ETEC).